The chain runs to 312 residues: Zinc transporter ZitB (312 aa).

5 consecutive transmembrane segments (helical) span residues 21-41 (LLFAFIVTAGFMLLEVVGGIL), 48-68 (LADAGHMLTDAAALLFALLVV), 90-110 (AAFVNAIALVVITLLIVWEAI), 123-143 (LMMVIAVAGLLANLFAFWILH), and 164-184 (LLGSVGAIVAALIIIWTGWTP).

The protein belongs to the cation diffusion facilitator (CDF) transporter (TC 2.A.4) family. SLC30A subfamily.

The protein resides in the cell inner membrane. Involved in zinc efflux across the cytoplasmic membrane, thus reducing zinc accumulation in the cytoplasm and rendering bacteria more resistant to zinc. It may contribute to zinc homeostasis at low concentrations of zinc. In Salmonella typhi, this protein is Zinc transporter ZitB.